A 142-amino-acid chain; its full sequence is Transcription antitermination protein NusB (142 aa).

The protein belongs to the NusB family.

Functionally, involved in transcription antitermination. Required for transcription of ribosomal RNA (rRNA) genes. Binds specifically to the boxA antiterminator sequence of the ribosomal RNA (rrn) operons. This Borrelia garinii subsp. bavariensis (strain ATCC BAA-2496 / DSM 23469 / PBi) (Borreliella bavariensis) protein is Transcription antitermination protein NusB.